Reading from the N-terminus, the 198-residue chain is Large ribosomal subunit protein uL13 (198 aa).

The protein belongs to the universal ribosomal protein uL13 family.

This chain is Large ribosomal subunit protein uL13 (RPL13A), found in Tetrahymena thermophila (strain SB210).